Consider the following 201-residue polypeptide: Small ribosomal subunit protein uS4 (201 aa).

The segment at Met1–Arg38 is disordered. Positions Ser91–Ala157 constitute an S4 RNA-binding domain.

This sequence belongs to the universal ribosomal protein uS4 family. Part of the 30S ribosomal subunit. Contacts protein S5. The interaction surface between S4 and S5 is involved in control of translational fidelity.

In terms of biological role, one of the primary rRNA binding proteins, it binds directly to 16S rRNA where it nucleates assembly of the body of the 30S subunit. With S5 and S12 plays an important role in translational accuracy. The protein is Small ribosomal subunit protein uS4 of Mycobacterium sp. (strain JLS).